The primary structure comprises 111 residues: Large ribosomal subunit protein uL22 (111 aa).

The protein belongs to the universal ribosomal protein uL22 family. Part of the 50S ribosomal subunit.

Its function is as follows. This protein binds specifically to 23S rRNA; its binding is stimulated by other ribosomal proteins, e.g. L4, L17, and L20. It is important during the early stages of 50S assembly. It makes multiple contacts with different domains of the 23S rRNA in the assembled 50S subunit and ribosome. The globular domain of the protein is located near the polypeptide exit tunnel on the outside of the subunit, while an extended beta-hairpin is found that lines the wall of the exit tunnel in the center of the 70S ribosome. This is Large ribosomal subunit protein uL22 from Polynucleobacter necessarius subsp. necessarius (strain STIR1).